The primary structure comprises 402 residues: 1-deoxy-D-xylulose 5-phosphate reductoisomerase (402 aa).

Thr10, Gly11, Ser12, Ile13, Gly36, Arg37, Asn38, and Asn124 together coordinate NADPH. Lys125 serves as a coordination point for 1-deoxy-D-xylulose 5-phosphate. Glu126 contributes to the NADPH binding site. Asp150 lines the Mn(2+) pocket. The 1-deoxy-D-xylulose 5-phosphate site is built by Ser151, Glu152, Ser186, and His209. Glu152 contributes to the Mn(2+) binding site. Residue Gly215 coordinates NADPH. Positions 222, 227, 228, and 231 each coordinate 1-deoxy-D-xylulose 5-phosphate. Glu231 contacts Mn(2+).

Belongs to the DXR family. It depends on Mg(2+) as a cofactor. Mn(2+) is required as a cofactor.

It carries out the reaction 2-C-methyl-D-erythritol 4-phosphate + NADP(+) = 1-deoxy-D-xylulose 5-phosphate + NADPH + H(+). The protein operates within isoprenoid biosynthesis; isopentenyl diphosphate biosynthesis via DXP pathway; isopentenyl diphosphate from 1-deoxy-D-xylulose 5-phosphate: step 1/6. Inhibited by fosmidomycin. Catalyzes the NADPH-dependent rearrangement and reduction of 1-deoxy-D-xylulose-5-phosphate (DXP) to 2-C-methyl-D-erythritol 4-phosphate (MEP). The polypeptide is 1-deoxy-D-xylulose 5-phosphate reductoisomerase (Synechococcus sp. (strain ATCC 27144 / PCC 6301 / SAUG 1402/1) (Anacystis nidulans)).